A 477-amino-acid polypeptide reads, in one-letter code: V-type proton ATPase subunit B (477 aa).

Arg365 contributes to the ATP binding site.

Belongs to the ATPase alpha/beta chains family. V-ATPase is a heteromultimeric enzyme composed of a peripheral catalytic V1 complex (components A to H) attached to an integral membrane V0 proton pore complex (components: a, c, c', c'', d, e, f and VOA1).

Its subcellular location is the vacuole membrane. Functionally, non-catalytic subunit of the V1 complex of vacuolar(H+)-ATPase (V-ATPase), a multisubunit enzyme composed of a peripheral complex (V1) that hydrolyzes ATP and a membrane integral complex (V0) that translocates protons. V-ATPase is responsible for acidifying and maintaining the pH of intracellular compartments. This is V-type proton ATPase subunit B from Encephalitozoon cuniculi (strain GB-M1) (Microsporidian parasite).